Consider the following 327-residue polypeptide: Lipoyl synthase (327 aa).

7 residues coordinate [4Fe-4S] cluster: Cys72, Cys77, Cys83, Cys98, Cys102, Cys105, and Ser313. One can recognise a Radical SAM core domain in the interval 83 to 302 (CWSHGTATIM…RKVGLEKGFL (220 aa)).

The protein belongs to the radical SAM superfamily. Lipoyl synthase family. [4Fe-4S] cluster serves as cofactor.

The protein localises to the cytoplasm. The catalysed reaction is [[Fe-S] cluster scaffold protein carrying a second [4Fe-4S](2+) cluster] + N(6)-octanoyl-L-lysyl-[protein] + 2 oxidized [2Fe-2S]-[ferredoxin] + 2 S-adenosyl-L-methionine + 4 H(+) = [[Fe-S] cluster scaffold protein] + N(6)-[(R)-dihydrolipoyl]-L-lysyl-[protein] + 4 Fe(3+) + 2 hydrogen sulfide + 2 5'-deoxyadenosine + 2 L-methionine + 2 reduced [2Fe-2S]-[ferredoxin]. Its pathway is protein modification; protein lipoylation via endogenous pathway; protein N(6)-(lipoyl)lysine from octanoyl-[acyl-carrier-protein]: step 2/2. In terms of biological role, catalyzes the radical-mediated insertion of two sulfur atoms into the C-6 and C-8 positions of the octanoyl moiety bound to the lipoyl domains of lipoate-dependent enzymes, thereby converting the octanoylated domains into lipoylated derivatives. The polypeptide is Lipoyl synthase (Francisella tularensis subsp. mediasiatica (strain FSC147)).